We begin with the raw amino-acid sequence, 236 residues long: Probable metal transport system ATP-binding protein CT_416 (236 aa).

The 232-residue stretch at M5 to P236 folds into the ABC transporter domain. G39–T46 contributes to the ATP binding site.

The protein belongs to the ABC transporter superfamily.

The protein localises to the cell inner membrane. Functionally, part of an ATP-driven transport system CT_415/CT_416/CT_417 for a metal. Probably responsible for energy coupling to the transport system. The polypeptide is Probable metal transport system ATP-binding protein CT_416 (Chlamydia trachomatis serovar D (strain ATCC VR-885 / DSM 19411 / UW-3/Cx)).